Consider the following 171-residue polypeptide: Shikimate kinase (171 aa).

An ATP-binding site is contributed by 14–19 (GAGKST). Serine 18 is a binding site for Mg(2+). Residues aspartate 36, arginine 60, and glycine 82 each coordinate substrate. Arginine 120 provides a ligand contact to ATP. Substrate is bound at residue arginine 139. Glutamine 156 contacts ATP.

It belongs to the shikimate kinase family. Monomer. It depends on Mg(2+) as a cofactor.

The protein localises to the cytoplasm. It carries out the reaction shikimate + ATP = 3-phosphoshikimate + ADP + H(+). It functions in the pathway metabolic intermediate biosynthesis; chorismate biosynthesis; chorismate from D-erythrose 4-phosphate and phosphoenolpyruvate: step 5/7. Catalyzes the specific phosphorylation of the 3-hydroxyl group of shikimic acid using ATP as a cosubstrate. In Psychromonas ingrahamii (strain DSM 17664 / CCUG 51855 / 37), this protein is Shikimate kinase.